The following is a 1500-amino-acid chain: Copper-transporting ATPase 1 (1500 aa).

Topologically, residues 1–653 are cytoplasmic; sequence MDPSMGVNSV…KREIRQWRRS (653 aa). HMA domains lie at 8-74 and 85-151; these read NSVT…FDAV and TDTL…LDTG. Residues Thr18, Cys19, and Cys22 each coordinate Cu(+). Thr152 carries the phosphothreonine modification. The HMA 3 domain maps to 171 to 237; sequence VVLKMKVEGM…QIEAMGFPAF (67 aa). Residues Cys182 and Cys185 each contribute to the Cu(+) site. Ser270 is subject to Phosphoserine. Residues 277–343 form the HMA 4 domain; the sequence is STATFIIDGM…AIEAVSPGLY (67 aa). Cu(+) is bound by residues Cys288 and Cys291. Residue Thr327 is modified to Phosphothreonine. 4 positions are modified to phosphoserine: Ser339, Ser353, Ser357, and Ser362. HMA domains lie at 377-443, 488-554, and 564-630; these read QETV…FDAT, SKCY…FGAT, and GVLE…FEAS. The Cu(+) site is built by Cys388, Cys391, Cys499, Cys502, Cys575, and Cys578. Residues 654 to 675 traverse the membrane as a helical segment; sequence FLVSLFFCIPVMGLMIYMMVMD. Residues 676–714 are Extracellular-facing; it reads HHFATLHHNQNMSKEEMINLHSSMFLERQILPGLSVMNL. Asn686 carries an N-linked (GlcNAc...) asparagine glycan. The helical transmembrane segment at 715-734 threads the bilayer; it reads LSFLLCVPVQFFGGWYFYIQ. Topologically, residues 735-741 are cytoplasmic; sequence AYKALKH. Residues 742–762 form a helical membrane-spanning segment; the sequence is KTANMDVLIVLATTIAFAYSL. At 763 to 781 the chain is on the extracellular side; it reads IILLVAMYERAKVNPITFF. The chain crosses the membrane as a helical span at residues 782–802; sequence DTPPMLFVFIALGRWLEHIAK. Residues 803–936 lie on the Cytoplasmic side of the membrane; sequence GKTSEALAKL…KAPIQQFADK (134 aa). A helical membrane pass occupies residues 937–959; it reads LSGYFVPFIVFVSIATLLVWIVI. The Extracellular segment spans residues 960–989; that stretch reads GFLNFEIVETYFPGYNRSISRTETIIRFAF. N-linked (GlcNAc...) asparagine glycosylation occurs at Asn975. The helical transmembrane segment at 990 to 1011 threads the bilayer; that stretch reads QASITVLCIACPCSLGLATPTA. The Cytoplasmic portion of the chain corresponds to 1012–1356; that stretch reads VMVGTGVGAQ…LSRKTVKRIR (345 aa). Asp1044 acts as the 4-aspartylphosphate intermediate in catalysis. ATP is bound at residue Glu1081. Thr1212 bears the Phosphothreonine mark. Positions 1301 and 1305 each coordinate Mg(2+). Residues 1357–1374 form a helical membrane-spanning segment; sequence INFVFALIYNLVGIPIAA. At 1375–1385 the chain is on the extracellular side; that stretch reads GVFMPIGLVLQ. The chain crosses the membrane as a helical span at residues 1386–1405; it reads PWMGSAAMAASSVSVVLSSL. The Cytoplasmic segment spans residues 1406 to 1500; sequence FLKLYRKPTY…DFREDDDTAL (95 aa). A phosphoserine mark is found at Ser1430, Ser1432, Ser1460, Ser1463, and Ser1466. Positions 1467–1468 match the Endocytosis signal motif; that stretch reads LL. Ser1469, Ser1473, Ser1476, and Ser1486 each carry phosphoserine. The PDZD11-binding stretch occupies residues 1486–1500; sequence SLLVGDFREDDDTAL. Residues 1487–1488 carry the Endocytosis signal motif; it reads LL.

The protein belongs to the cation transport ATPase (P-type) (TC 3.A.3) family. Type IB subfamily. Monomer. Interacts with PDZD11. Interacts with ATOX1 and COMMD1. Interacts with TYRP1. Directly interacts with SOD3; this interaction is copper-dependent and is required for SOD3 activity. In terms of tissue distribution, widely expressed including in heart, brain, lung, muscle, kidney, pancreas, and to a lesser extent placenta. Expressed in fibroblasts, aortic smooth muscle cells, aortic endothelial cells and umbilical vein endothelial cells (at protein level). Expressed in cerebellum and brain cortex.

The protein resides in the golgi apparatus. Its subcellular location is the trans-Golgi network membrane. It localises to the cell membrane. The protein localises to the melanosome membrane. It is found in the early endosome membrane. The protein resides in the cell projection. Its subcellular location is the axon. It localises to the dendrite. The protein localises to the postsynaptic density. It is found in the cytoplasm. The protein resides in the cytosol. Its subcellular location is the endoplasmic reticulum. It catalyses the reaction Cu(+)(in) + ATP + H2O = Cu(+)(out) + ADP + phosphate + H(+). Functionally, ATP-driven copper (Cu(+)) ion pump that plays an important role in intracellular copper ion homeostasis. Within a catalytic cycle, acquires Cu(+) ion from donor protein on the cytoplasmic side of the membrane and delivers it to acceptor protein on the lumenal side. The transfer of Cu(+) ion across the membrane is coupled to ATP hydrolysis and is associated with a transient phosphorylation that shifts the pump conformation from inward-facing to outward-facing state. Under physiological conditions, at low cytosolic copper concentration, it is localized at the trans-Golgi network (TGN) where it transfers Cu(+) ions to cuproenzymes of the secretory pathway. Upon elevated cytosolic copper concentrations, it relocalizes to the plasma membrane where it is responsible for the export of excess Cu(+) ions. May play a dual role in neuron function and survival by regulating cooper efflux and neuronal transmission at the synapse as well as by supplying Cu(+) ions to enzymes such as PAM, TYR and SOD3. In the melanosomes of pigmented cells, provides copper cofactor to TYR to form an active TYR holoenzyme for melanin biosynthesis. The polypeptide is Copper-transporting ATPase 1 (Homo sapiens (Human)).